Here is a 153-residue protein sequence, read N- to C-terminus: 6,7-dimethyl-8-ribityllumazine synthase (153 aa).

5-amino-6-(D-ribitylamino)uracil contacts are provided by residues Phe22, 56 to 58 (AFE), and 80 to 82 (TVI). 85–86 (AT) provides a ligand contact to (2S)-2-hydroxy-3-oxobutyl phosphate. Residue His88 is the Proton donor of the active site. Phe113 lines the 5-amino-6-(D-ribitylamino)uracil pocket. Arg127 lines the (2S)-2-hydroxy-3-oxobutyl phosphate pocket.

It belongs to the DMRL synthase family.

The enzyme catalyses (2S)-2-hydroxy-3-oxobutyl phosphate + 5-amino-6-(D-ribitylamino)uracil = 6,7-dimethyl-8-(1-D-ribityl)lumazine + phosphate + 2 H2O + H(+). It functions in the pathway cofactor biosynthesis; riboflavin biosynthesis; riboflavin from 2-hydroxy-3-oxobutyl phosphate and 5-amino-6-(D-ribitylamino)uracil: step 1/2. In terms of biological role, catalyzes the formation of 6,7-dimethyl-8-ribityllumazine by condensation of 5-amino-6-(D-ribitylamino)uracil with 3,4-dihydroxy-2-butanone 4-phosphate. This is the penultimate step in the biosynthesis of riboflavin. The protein is 6,7-dimethyl-8-ribityllumazine synthase of Clostridium perfringens (strain 13 / Type A).